A 478-amino-acid chain; its full sequence is UDP-N-acetylmuramate--L-alanine ligase (478 aa).

122–128 serves as a coordination point for ATP; that stretch reads GTHGKTT.

It belongs to the MurCDEF family.

The protein localises to the cytoplasm. The enzyme catalyses UDP-N-acetyl-alpha-D-muramate + L-alanine + ATP = UDP-N-acetyl-alpha-D-muramoyl-L-alanine + ADP + phosphate + H(+). Its pathway is cell wall biogenesis; peptidoglycan biosynthesis. Its function is as follows. Cell wall formation. This Stenotrophomonas maltophilia (strain K279a) protein is UDP-N-acetylmuramate--L-alanine ligase.